We begin with the raw amino-acid sequence, 851 residues long: MAPMAMDHLCFVLPTESGELKPPVMVEETTEEEEEKKSRDCGRQVVSLIGDLFRRLHGSKLVKSLNLCSINESKDSISMEINKSFTDMEGVQLSSKVGCENPRIFGYSELYIGTNGFSDELILGSGGFGRVYKALLPSDGTTVAVKCLAEKKGEQFEKTFAAELVAVAQLRHRNLVKLRGWCLHEDELLLVYDYMPNRSLDRVLFRRPEVNSDFKPLDWDRRGKIVKGLAAALFYLHEQLETQIIHRDVKTSNVMLDSEFNAKLGDFGLARWLEHKIDETEHDSSYDSVSSFRNHQFRVADSTRIGGTIGYLPPESFRKKTVATAKTDVFSFGVVVLEVVSGRRAVDLSFSEDKIILLDWVRRLSDNRKLLDAGDSRLAKGSYDLSDMKRMIHLALLCSLNNPTHRPNMKWVIGALSGEFSGNLPALPSFKSHPLYIPLSSLKSTSTSATTTTTRTTMTTTTSTTSFNASSESTPSSNYVTALEDSIYQTAETGENPYFNYNSRRVMSSKSFVLDTPREISYNDLVLATDNFSDARRVAEVDFGTAYYGLLNGDQHIVVKRLGMTKCPALVTRFSTELLNLGRLRHRNLVMLRGWCTEHGEMLVVYDYSANRKLSHLLFHNHIPGNSVLRWKSRYNVIKSLACAVRYLHEEWDEQVIHRNITSSTIFLDRDMNPRLCGFALAEFLSRNDKAHQAAKKKGSAQGIFGYMAPEYMESGEATTMADVYSFGVVVLEMVTGQPAVDYKRKKEDALMVLRIREVVGNRKKLLEEIADIHLDDEYENRELARLLRLGLVCTRTDPKLRPSISQVVSILDGSERFFEEEGGKEGDVSRKQMYDSSMLMIRQMQALGIH.

The 320-residue stretch at 117 to 436 (FSDELILGSG…LPSFKSHPLY (320 aa)) folds into the Protein kinase 1 domain. ATP contacts are provided by residues 123-131 (LGSGGFGRV) and Lys-146. The active-site Proton acceptor is the Asp-248. The tract at residues 448–471 (SATTTTTRTTMTTTTSTTSFNASS) is disordered. The region spanning 532-819 (FSDARRVAEV…SILDGSERFF (288 aa)) is the Protein kinase 2 domain. ATP is bound by residues 538-546 (VAEVDFGTA) and Lys-560.

This sequence belongs to the protein kinase superfamily. Ser/Thr protein kinase family.

It carries out the reaction L-seryl-[protein] + ATP = O-phospho-L-seryl-[protein] + ADP + H(+). It catalyses the reaction L-threonyl-[protein] + ATP = O-phospho-L-threonyl-[protein] + ADP + H(+). This is Receptor like protein kinase S.2 (LECRKS2) from Arabidopsis thaliana (Mouse-ear cress).